Consider the following 221-residue polypeptide: Stromal cell-derived factor 2-like protein 1 (221 aa).

A signal peptide spans 1 to 28; sequence MWSAGRGGAAWPVLLGLLLALLVPGGGA. MIR domains lie at 33–87, 95–150, and 151–205; these read AELV…IRGG, GSPV…VRCS, and GQHW…AMEG. Residue serine 215 is modified to Phosphoserine. Residues 218 to 221 carry the Prevents secretion from ER motif; that stretch reads HDEL.

In terms of assembly, part of a large chaperone multiprotein complex comprising CABP1, DNAJB11, HSP90B1, HSPA5, HYOU, PDIA2, PDIA4, PPIB, SDF2L1, UGGT1 and very small amounts of ERP29, but not, or at very low levels, CALR nor CANX. In terms of tissue distribution, ubiquitously expressed with high expression in testis, moderate expression in the pancreas, spleen, prostate, small intestine and colon. Very low expression is seen in brain and skeletal muscle.

The protein localises to the endoplasmic reticulum lumen. The polypeptide is Stromal cell-derived factor 2-like protein 1 (SDF2L1) (Homo sapiens (Human)).